Consider the following 802-residue polypeptide: Leucine--tRNA ligase (802 aa).

Positions 40–51 (PYPSGAGLHVGH) match the 'HIGH' region motif. Residues 576-580 (KMSKS) carry the 'KMSKS' region motif. Residue Lys579 participates in ATP binding.

It belongs to the class-I aminoacyl-tRNA synthetase family.

The protein localises to the cytoplasm. It carries out the reaction tRNA(Leu) + L-leucine + ATP = L-leucyl-tRNA(Leu) + AMP + diphosphate. The sequence is that of Leucine--tRNA ligase from Bacillus cereus (strain G9842).